Here is a 354-residue protein sequence, read N- to C-terminus: Probable L-ascorbate-6-phosphate lactonase UlaG (354 aa).

It belongs to the UlaG family. The cofactor is a divalent metal cation.

The protein resides in the cytoplasm. It carries out the reaction L-ascorbate 6-phosphate + H2O = 3-dehydro-L-gulonate 6-phosphate. Its pathway is cofactor degradation; L-ascorbate degradation; D-xylulose 5-phosphate from L-ascorbate: step 1/4. Probably catalyzes the hydrolysis of L-ascorbate-6-P into 3-keto-L-gulonate-6-P. Is essential for L-ascorbate utilization under anaerobic conditions. The protein is Probable L-ascorbate-6-phosphate lactonase UlaG of Salmonella gallinarum (strain 287/91 / NCTC 13346).